A 577-amino-acid polypeptide reads, in one-letter code: Arginine--tRNA ligase (577 aa).

The 'HIGH' region signature appears at 122–132; the sequence is PNVAKEMHVGH.

This sequence belongs to the class-I aminoacyl-tRNA synthetase family. In terms of assembly, monomer.

The protein resides in the cytoplasm. It catalyses the reaction tRNA(Arg) + L-arginine + ATP = L-arginyl-tRNA(Arg) + AMP + diphosphate. This is Arginine--tRNA ligase from Vibrio campbellii (strain ATCC BAA-1116).